Reading from the N-terminus, the 25-residue chain is Superoxide dismutase [Mn], mitochondrial (25 aa).

H9 is a Mn(2+) binding site.

This sequence belongs to the iron/manganese superoxide dismutase family. In terms of assembly, homotetramer. Mn(2+) is required as a cofactor.

Its subcellular location is the mitochondrion matrix. It catalyses the reaction 2 superoxide + 2 H(+) = H2O2 + O2. In terms of biological role, destroys superoxide anion radicals which are normally produced within the cells and which are toxic to biological systems. The protein is Superoxide dismutase [Mn], mitochondrial of Alternaria alternata (Alternaria rot fungus).